A 220-amino-acid chain; its full sequence is Sugar transporter SWEET1 (220 aa).

A run of 7 helical transmembrane segments spans residues 9-29, 44-64, 70-90, 106-126, 138-158, 167-187, and 191-211; these read LMTF…IMPL, VAGL…SYAL, TMLF…FNYW, VMIA…NTVD, LSSV…AIVI, IINV…FGLL, and IYIY…LTLI. One can recognise a MtN3/slv 1 domain in the interval 12 to 92; that stretch reads FIQFCATFIT…IYYVFNYWKN (81 aa). In terms of domain architecture, MtN3/slv 2 spans 134 to 217; the sequence is RLGFLSSVVC…LTLIKLYPPQ (84 aa).

The protein belongs to the SWEET sugar transporter family.

It localises to the golgi apparatus membrane. The protein localises to the cell membrane. Functionally, mediates both low-affinity uptake and efflux of sugar across the membrane. The chain is Sugar transporter SWEET1 (slc50a1) from Dictyostelium discoideum (Social amoeba).